Here is a 206-residue protein sequence, read N- to C-terminus: Thymidylate kinase (206 aa).

An ATP-binding site is contributed by 11–18 (GIDGAGKT).

The protein belongs to the thymidylate kinase family.

It carries out the reaction dTMP + ATP = dTDP + ADP. Functionally, phosphorylation of dTMP to form dTDP in both de novo and salvage pathways of dTTP synthesis. This Burkholderia vietnamiensis (strain G4 / LMG 22486) (Burkholderia cepacia (strain R1808)) protein is Thymidylate kinase.